The primary structure comprises 208 residues: Large ribosomal subunit protein bL25 (208 aa).

The protein belongs to the bacterial ribosomal protein bL25 family. CTC subfamily. Part of the 50S ribosomal subunit; part of the 5S rRNA/L5/L18/L25 subcomplex. Contacts the 5S rRNA. Binds to the 5S rRNA independently of L5 and L18.

Functionally, this is one of the proteins that binds to the 5S RNA in the ribosome where it forms part of the central protuberance. The polypeptide is Large ribosomal subunit protein bL25 (Acidovorax ebreus (strain TPSY) (Diaphorobacter sp. (strain TPSY))).